Consider the following 387-residue polypeptide: Transcription termination/antitermination protein NusA (387 aa).

The S1 motif domain maps to 145–209 (GQVLTGVVTR…AKGPSLLVSR (65 aa)). The region spanning 312-379 (AKKARVKVTK…ARERKAREEF (68 aa)) is the KH domain.

The protein belongs to the NusA family. Monomer. Binds directly to the core enzyme of the DNA-dependent RNA polymerase and to nascent RNA.

The protein localises to the cytoplasm. Functionally, participates in both transcription termination and antitermination. The chain is Transcription termination/antitermination protein NusA from Thermus thermophilus (strain ATCC 27634 / DSM 579 / HB8).